The primary structure comprises 428 residues: Enolase (428 aa).

Q163 provides a ligand contact to (2R)-2-phosphoglycerate. E205 functions as the Proton donor in the catalytic mechanism. The Mg(2+) site is built by D242, E283, and D310. Residues K335, R364, S365, and K386 each contribute to the (2R)-2-phosphoglycerate site. Residue K335 is the Proton acceptor of the active site.

The protein belongs to the enolase family. The cofactor is Mg(2+).

It is found in the cytoplasm. The protein resides in the secreted. Its subcellular location is the cell surface. The enzyme catalyses (2R)-2-phosphoglycerate = phosphoenolpyruvate + H2O. The protein operates within carbohydrate degradation; glycolysis; pyruvate from D-glyceraldehyde 3-phosphate: step 4/5. In terms of biological role, catalyzes the reversible conversion of 2-phosphoglycerate (2-PG) into phosphoenolpyruvate (PEP). It is essential for the degradation of carbohydrates via glycolysis. In Sulfurihydrogenibium sp. (strain YO3AOP1), this protein is Enolase.